The primary structure comprises 255 residues: 4-diphosphocytidyl-2-C-methyl-D-erythritol kinase (255 aa).

The active site involves lysine 6. An ATP-binding site is contributed by 95 to 105 (PVCAGLGGGSS). Aspartate 137 is a catalytic residue.

The protein belongs to the GHMP kinase family. IspE subfamily.

It carries out the reaction 4-CDP-2-C-methyl-D-erythritol + ATP = 4-CDP-2-C-methyl-D-erythritol 2-phosphate + ADP + H(+). The protein operates within isoprenoid biosynthesis; isopentenyl diphosphate biosynthesis via DXP pathway; isopentenyl diphosphate from 1-deoxy-D-xylulose 5-phosphate: step 3/6. Functionally, catalyzes the phosphorylation of the position 2 hydroxy group of 4-diphosphocytidyl-2C-methyl-D-erythritol. This chain is 4-diphosphocytidyl-2-C-methyl-D-erythritol kinase, found in Campylobacter jejuni subsp. jejuni serotype O:6 (strain 81116 / NCTC 11828).